A 545-amino-acid chain; its full sequence is Alpha-galactosidase A (545 aa).

Residues 1–31 (MIQGLESIMNQGTKRILLAATLAATPWQVYG) form the signal peptide. Cys54 and Cys86 are joined by a disulfide. N-linked (GlcNAc...) asparagine glycosylation is found at Asn57, Asn95, Asn101, and Asn131. Cys134 and Cys164 are oxidised to a cystine. The Nucleophile role is filled by Asp162. A glycan (N-linked (GlcNAc...) asparagine) is linked at Asn211. Asp220 acts as the Proton donor in catalysis. N-linked (GlcNAc...) asparagine glycans are attached at residues Asn363 and Asn444. Residues 421-518 (CSSVVPTGLV…KNAKTDGCLT (98 aa)) enclose the Ricin B-type lectin domain. 2 cysteine pairs are disulfide-bonded: Cys438–Cys452 and Cys477–Cys490.

The protein belongs to the glycosyl hydrolase 27 family. In terms of processing, a C-terminal Ser/Thr-rich region may provide possible sites for O-glycosylation.

The protein resides in the secreted. It catalyses the reaction Hydrolysis of terminal, non-reducing alpha-D-galactose residues in alpha-D-galactosides, including galactose oligosaccharides, galactomannans and galactolipids.. Its function is as follows. Hydrolyzes a variety of simple alpha-D-galactoside as well as more complex molecules such as oligosaccharides and polysaccharides. This Aspergillus niger protein is Alpha-galactosidase A (aglA).